The chain runs to 145 residues: MDINEIREYLPHRYPFLLVDRVTEITLGETIVAYKNVSINEPFFNGHFPHHPIMPGVLIIEAMAQACGILGFKTVNKLPADGYVYYLVGSDNVRFKRPVMPGDQLRLEANVIRGKRGIWKFACRATVDGELACEAEIICAERKVA.

The active site involves His47.

The protein belongs to the thioester dehydratase family. FabZ subfamily.

It localises to the cytoplasm. The catalysed reaction is a (3R)-hydroxyacyl-[ACP] = a (2E)-enoyl-[ACP] + H2O. In terms of biological role, involved in unsaturated fatty acids biosynthesis. Catalyzes the dehydration of short chain beta-hydroxyacyl-ACPs and long chain saturated and unsaturated beta-hydroxyacyl-ACPs. In Chromohalobacter salexigens (strain ATCC BAA-138 / DSM 3043 / CIP 106854 / NCIMB 13768 / 1H11), this protein is 3-hydroxyacyl-[acyl-carrier-protein] dehydratase FabZ.